Consider the following 256-residue polypeptide: Thiazole synthase (256 aa).

The active-site Schiff-base intermediate with DXP is the K95. 1-deoxy-D-xylulose 5-phosphate-binding positions include G156, 182 to 183 (AG), and 204 to 205 (NT).

It belongs to the ThiG family. Homotetramer. Forms heterodimers with either ThiH or ThiS.

The protein localises to the cytoplasm. The enzyme catalyses [ThiS sulfur-carrier protein]-C-terminal-Gly-aminoethanethioate + 2-iminoacetate + 1-deoxy-D-xylulose 5-phosphate = [ThiS sulfur-carrier protein]-C-terminal Gly-Gly + 2-[(2R,5Z)-2-carboxy-4-methylthiazol-5(2H)-ylidene]ethyl phosphate + 2 H2O + H(+). Its pathway is cofactor biosynthesis; thiamine diphosphate biosynthesis. Functionally, catalyzes the rearrangement of 1-deoxy-D-xylulose 5-phosphate (DXP) to produce the thiazole phosphate moiety of thiamine. Sulfur is provided by the thiocarboxylate moiety of the carrier protein ThiS. In vitro, sulfur can be provided by H(2)S. The sequence is that of Thiazole synthase from Citrobacter koseri (strain ATCC BAA-895 / CDC 4225-83 / SGSC4696).